Reading from the N-terminus, the 326-residue chain is Pyruvate dehydrogenase E1 component subunit alpha (326 aa).

As to quaternary structure, heterodimer of an alpha and a beta chain. Thiamine diphosphate is required as a cofactor.

It catalyses the reaction N(6)-[(R)-lipoyl]-L-lysyl-[protein] + pyruvate + H(+) = N(6)-[(R)-S(8)-acetyldihydrolipoyl]-L-lysyl-[protein] + CO2. In terms of biological role, the pyruvate dehydrogenase complex catalyzes the overall conversion of pyruvate to acetyl-CoA and CO(2). It contains multiple copies of three enzymatic components: pyruvate dehydrogenase (E1), dihydrolipoamide acetyltransferase (E2) and lipoamide dehydrogenase (E3). In Rickettsia typhi (strain ATCC VR-144 / Wilmington), this protein is Pyruvate dehydrogenase E1 component subunit alpha (pdhA).